We begin with the raw amino-acid sequence, 103 residues long: Large ribosomal subunit protein bL21 (103 aa).

The protein belongs to the bacterial ribosomal protein bL21 family. As to quaternary structure, part of the 50S ribosomal subunit. Contacts protein L20.

Functionally, this protein binds to 23S rRNA in the presence of protein L20. The chain is Large ribosomal subunit protein bL21 from Shewanella woodyi (strain ATCC 51908 / MS32).